We begin with the raw amino-acid sequence, 160 residues long: Protein BOLA1, chloroplastic (160 aa).

A chloroplast-targeting transit peptide spans 1–50 (MFSSSIRLIVSGFHRTQPLKSPVNSPSVFISVPKFFNSESKSTGTGSRSV). Positions 39–61 (ESKSTGTGSRSVAMSSVEKTGSD) are enriched in polar residues. The tract at residues 39–66 (ESKSTGTGSRSVAMSSVEKTGSDSGAIE) is disordered.

The protein belongs to the bolA/yrbA family. Interacts in vitro with GRXS14, GRXS15, GRXS16 and GRXS17, but not with GRXC5. Interacts in vivo only with GRXS14 and GRXS16.

It localises to the plastid. It is found in the chloroplast. Its function is as follows. May act either alone or in interaction with glutaredoxin as a redox-regulated transcriptional regulator, or as a factor regulating Fe-S cluster biogenesis. The glutaredoxin-BOLA1 heterodimers bind a labile, oxygen sensitive iron-sulfur cluster. The chain is Protein BOLA1, chloroplastic from Arabidopsis thaliana (Mouse-ear cress).